A 305-amino-acid polypeptide reads, in one-letter code: UDP-3-O-acyl-N-acetylglucosamine deacetylase (305 aa).

Positions 78, 235, and 239 each coordinate Zn(2+). The active-site Proton donor is histidine 262.

This sequence belongs to the LpxC family. Zn(2+) serves as cofactor.

The catalysed reaction is a UDP-3-O-[(3R)-3-hydroxyacyl]-N-acetyl-alpha-D-glucosamine + H2O = a UDP-3-O-[(3R)-3-hydroxyacyl]-alpha-D-glucosamine + acetate. The protein operates within glycolipid biosynthesis; lipid IV(A) biosynthesis; lipid IV(A) from (3R)-3-hydroxytetradecanoyl-[acyl-carrier-protein] and UDP-N-acetyl-alpha-D-glucosamine: step 2/6. In terms of biological role, catalyzes the hydrolysis of UDP-3-O-myristoyl-N-acetylglucosamine to form UDP-3-O-myristoylglucosamine and acetate, the committed step in lipid A biosynthesis. This chain is UDP-3-O-acyl-N-acetylglucosamine deacetylase, found in Citrifermentans bemidjiense (strain ATCC BAA-1014 / DSM 16622 / JCM 12645 / Bem) (Geobacter bemidjiensis).